The primary structure comprises 141 residues: ATP synthase epsilon chain (141 aa).

Belongs to the ATPase epsilon chain family. F-type ATPases have 2 components, CF(1) - the catalytic core - and CF(0) - the membrane proton channel. CF(1) has five subunits: alpha(3), beta(3), gamma(1), delta(1), epsilon(1). CF(0) has three main subunits: a, b and c.

The protein localises to the cell inner membrane. Produces ATP from ADP in the presence of a proton gradient across the membrane. The sequence is that of ATP synthase epsilon chain from Gluconacetobacter diazotrophicus (strain ATCC 49037 / DSM 5601 / CCUG 37298 / CIP 103539 / LMG 7603 / PAl5).